We begin with the raw amino-acid sequence, 132 residues long: S-protein homolog 8 (132 aa).

Positions Met-1–Gly-20 are cleaved as a signal peptide.

It belongs to the plant self-incompatibility (S1) protein family. As to expression, mostly expressed in seedlings, stems, leaves and floral tissues, and, to a lower extent, in roots.

It localises to the secreted. This is S-protein homolog 8 from Arabidopsis thaliana (Mouse-ear cress).